Reading from the N-terminus, the 223-residue chain is Phosphoribosylformylglycinamidine synthase subunit PurQ (223 aa).

The Glutamine amidotransferase type-1 domain occupies 3–223 (SAVVQLPGLN…FASALDVIAA (221 aa)). The active-site Nucleophile is Cys86. Active-site residues include His196 and Glu198.

In terms of assembly, part of the FGAM synthase complex composed of 1 PurL, 1 PurQ and 2 PurS subunits.

Its subcellular location is the cytoplasm. The enzyme catalyses N(2)-formyl-N(1)-(5-phospho-beta-D-ribosyl)glycinamide + L-glutamine + ATP + H2O = 2-formamido-N(1)-(5-O-phospho-beta-D-ribosyl)acetamidine + L-glutamate + ADP + phosphate + H(+). It catalyses the reaction L-glutamine + H2O = L-glutamate + NH4(+). The protein operates within purine metabolism; IMP biosynthesis via de novo pathway; 5-amino-1-(5-phospho-D-ribosyl)imidazole from N(2)-formyl-N(1)-(5-phospho-D-ribosyl)glycinamide: step 1/2. Functionally, part of the phosphoribosylformylglycinamidine synthase complex involved in the purines biosynthetic pathway. Catalyzes the ATP-dependent conversion of formylglycinamide ribonucleotide (FGAR) and glutamine to yield formylglycinamidine ribonucleotide (FGAM) and glutamate. The FGAM synthase complex is composed of three subunits. PurQ produces an ammonia molecule by converting glutamine to glutamate. PurL transfers the ammonia molecule to FGAR to form FGAM in an ATP-dependent manner. PurS interacts with PurQ and PurL and is thought to assist in the transfer of the ammonia molecule from PurQ to PurL. The polypeptide is Phosphoribosylformylglycinamidine synthase subunit PurQ (Rhizobium meliloti (strain 1021) (Ensifer meliloti)).